Here is a 93-residue protein sequence, read N- to C-terminus: uncharacterized protein (93 aa).

To M.tuberculosis Rv1738.

This is an uncharacterized protein from Mycobacterium tuberculosis (strain CDC 1551 / Oshkosh).